The primary structure comprises 408 residues: Putative odorant receptor 92a (408 aa).

At 1–52 (MLFRKRKPKSDDEVITFDELTRFPMTFYKTIGEDLYSDRDPNVIRRYLLRFY) the chain is on the cytoplasmic side. A helical membrane pass occupies residues 53–73 (LVLGFLNFNAYVVGEIAYFIV). Position 74 (H74) is a topological domain, extracellular. A helical membrane pass occupies residues 75-95 (IMSTTTLLEATAVAPCIGFSF). At 96–144 (MADFKQFGLTVNRKRLVRLLDDLKEIFPLDLEAQRKYNVSFYRKHMNRV) the chain is on the cytoplasmic side. The chain crosses the membrane as a helical span at residues 145–165 (MTLFTILCMTYTSSFSFYPAI). At 166–209 (KSTIKYYLMGSEIFERNYGFHILFPYDAETDLTVYWFSYWGLAH) the chain is on the extracellular side. The chain crosses the membrane as a helical span at residues 210-230 (CAYVAGVSYVCVDLLLIATIT). The Cytoplasmic portion of the chain corresponds to 231–276 (QLTMHFNFIANDLEAYEGGDHTDEENIKYLHNLVVYHARALDLSEE). Residues 277 to 301 (VNNIFSFLILWNFIAASLVICFAGF) traverse the membrane as a helical segment. The Extracellular segment spans residues 302-310 (QITASNVED). A helical membrane pass occupies residues 311-331 (IVLYFIFFSASLVQVFVVCYY). The Cytoplasmic segment spans residues 332–378 (GDEMISSSSRIGHSAFNQNWLPCSTKYKRILQFIIARSQKPASIRPP). Residues 379–399 (TFPPISFNTFMKVISMSYQFF) form a helical membrane-spanning segment. At 400–408 (ALLRTTYYG) the chain is on the extracellular side.

It belongs to the insect chemoreceptor superfamily. Heteromeric odorant receptor channel (TC 1.A.69) family. Or49a subfamily. Interacts with Orco. Complexes exist early in the endomembrane system in olfactory sensory neurons (OSNs), coupling these complexes to the conserved ciliary trafficking pathway.

It localises to the cell membrane. Its function is as follows. Odorant receptor which mediates acceptance or avoidance behavior, depending on its substrates. The odorant receptor repertoire encodes a large collection of odor stimuli that vary widely in identity, intensity, and duration. May form a complex with Orco to form odorant-sensing units, providing sensitive and prolonged odorant signaling and calcium permeability. This Drosophila melanogaster (Fruit fly) protein is Putative odorant receptor 92a (Or92a).